Consider the following 111-residue polypeptide: WAP four-disulfide core domain protein 12 (111 aa).

Residues 1–23 (MGSSSFLVLMVSLALVTLVAAEG) form the signal peptide. The WAP domain maps to 27–74 (GIEKAGVCPADNIRCFKSDPPQCHTDQDCLGERKCCYLHCGFKCVIPV). Cystine bridges form between C34–C62, C41–C66, C49–C61, and C55–C70. Residues 80–111 (GGNKDEDVSGPCPEPGWEAKSPGSSSTGCPQK) form a disordered region. Positions 101–111 (PGSSSTGCPQK) are enriched in polar residues.

The protein resides in the secreted. In terms of biological role, antibacterial protein. Putative acid-stable proteinase inhibitor. The sequence is that of WAP four-disulfide core domain protein 12 (WFDC12) from Macaca mulatta (Rhesus macaque).